Consider the following 174-residue polypeptide: Large ribosomal subunit protein uL13 (174 aa).

Disordered stretches follow at residues 1-22 and 153-174; these read MAFPDTDVSPPRGGPSSPAKSP and GETHPHSAQKPQVLKTQPLEVK.

It belongs to the universal ribosomal protein uL13 family. In terms of assembly, part of the 50S ribosomal subunit. Contacts proteins L3 and L20.

This protein is one of the early assembly proteins of the 50S ribosomal subunit. Binds to the 23S rRNA. The chain is Large ribosomal subunit protein uL13 (rplM) from Deinococcus radiodurans (strain ATCC 13939 / DSM 20539 / JCM 16871 / CCUG 27074 / LMG 4051 / NBRC 15346 / NCIMB 9279 / VKM B-1422 / R1).